The primary structure comprises 306 residues: MSSKQTQLKKGKQPSWIEIYLPKEVRPYAHLARLDKPIGSWLLAWPAFWSVALIADLGSLPKMLAIFGWWAVWIRGAGCTINDYFDRDFDKKVERTKSRPLASGAVSPAKGLWWLAFQLFIGLGVLYQFNILTLALAIVHVPFVFAYPLMKRITYWPQAFLGVMISWGALLGSSALKGSVVPSIAYPLYISSFFWTLVYDTIYAHQDKVDDAKAGIKSTALRFGDATKIWITWFGIGCIGALLLGGFIVNIGLPYYVFLAIATGQLIWQIFTVDLSSPMDCGKKFVSNQWFGAIIFTGILVGRLFP.

8 helical membrane-spanning segments follow: residues 38-58 (IGSW…ADLG), 61-81 (PKML…GCTI), 119-139 (LFIG…LAIV), 153-173 (ITYW…LLGS), 178-198 (GSVV…WTLV), 229-249 (IWIT…GFIV), 251-271 (IGLP…WQIF), and 285-305 (FVSN…GRLF).

Belongs to the UbiA prenyltransferase family. The cofactor is Mg(2+). In terms of tissue distribution, expressed only in roots.

The protein localises to the endoplasmic reticulum membrane. The catalysed reaction is 4-hydroxybenzoate + (2E)-geranyl diphosphate = 3-geranyl-4-hydroxybenzoate + diphosphate. Its function is as follows. Prenyltransferase involved in the biosynthesis of shikonin, a naphthoquinone secondary metabolite. Could accept only geranyl diphosphate and not dimethylallyl diphosphate, farnesyl diphosphate, or geranylgeranyl diphosphate as substrate. This chain is 4-hydroxybenzoate geranyltransferase 2 (PGT-2), found in Lithospermum erythrorhizon (Purple gromwell).